Consider the following 311-residue polypeptide: Quinolinate synthase (311 aa).

Iminosuccinate is bound by residues H25 and S42. A [4Fe-4S] cluster-binding site is contributed by C87. Iminosuccinate-binding positions include Y113–N115 and S130. C175 contacts [4Fe-4S] cluster. Residues H201–E203 and T218 contribute to the iminosuccinate site. C268 is a binding site for [4Fe-4S] cluster.

The protein belongs to the quinolinate synthase family. Type 2 subfamily. The cofactor is [4Fe-4S] cluster.

It localises to the cytoplasm. It carries out the reaction iminosuccinate + dihydroxyacetone phosphate = quinolinate + phosphate + 2 H2O + H(+). Its pathway is cofactor biosynthesis; NAD(+) biosynthesis; quinolinate from iminoaspartate: step 1/1. In terms of biological role, catalyzes the condensation of iminoaspartate with dihydroxyacetone phosphate to form quinolinate. This chain is Quinolinate synthase, found in Saccharolobus solfataricus (strain ATCC 35092 / DSM 1617 / JCM 11322 / P2) (Sulfolobus solfataricus).